We begin with the raw amino-acid sequence, 423 residues long: uncharacterized protein (423 aa).

The first 16 residues, 1 to 16, serve as a signal peptide directing secretion; that stretch reads MKSRIFFITLLTIVAA. Over 17-402 the chain is Extracellular; it reads QESADQLCSS…SSSAKEEQTS (386 aa). Disulfide bonds link Cys24/Cys217, Cys33/Cys43, Cys36/Cys68, Cys46/Cys57, Cys219/Cys238, Cys230/Cys241, Cys243/Cys252, Cys254/Cys288, Cys271/Cys286, Cys280/Cys291, Cys293/Cys303, Cys305/Cys327, Cys310/Cys325, Cys319/Cys330, Cys332/Cys341, and Cys343/Cys350. Asn65 is a glycosylation site (N-linked (GlcNAc...) asparagine). A cysteine-rich tandem repeats region spans residues 215-350; that stretch reads CGCECEKHPE…CSCSTASNNC (136 aa). 3 I-EGF domains span residues 219–253, 254–304, and 305–342; these read CEKH…DKCE, CPLA…KFCQ, and CDND…DDCS. Asn274 is a glycosylation site (N-linked (GlcNAc...) asparagine). N-linked (GlcNAc...) asparagine glycosylation is present at Asn307. Positions 354 to 406 are disordered; the sequence is GTPAPEEKDKPESVPEEPEATEKPDDMPSDSDLEKELDESSSAKEEQTSSSGV. A compositionally biased stretch (acidic residues) spans 380-392; the sequence is MPSDSDLEKELDE. A helical membrane pass occupies residues 403-421; it reads SSGVVSRVCVLLTFFLLVL. Residues 422–423 lie on the Cytoplasmic side of the membrane; the sequence is NF.

It belongs to the integrin beta chain family.

Its subcellular location is the membrane. This is an uncharacterized protein from Caenorhabditis elegans.